The primary structure comprises 185 residues: Tetratricopeptide repeat protein 36 homolog (185 aa).

TPR repeat units lie at residues 53-86 (SREL…AQRA), 88-119 (VLNN…ASDQ), and 125-158 (CHAH…GSKF).

Belongs to the TTC36 family.

This is Tetratricopeptide repeat protein 36 homolog from Drosophila pseudoobscura pseudoobscura (Fruit fly).